A 129-amino-acid chain; its full sequence is Large-conductance mechanosensitive channel (129 aa).

3 helical membrane-spanning segments follow: residues Ile-14 to Leu-34, Ile-38 to Tyr-58, and Leu-67 to Ala-87.

It belongs to the MscL family. In terms of assembly, homopentamer.

Its subcellular location is the cell membrane. Its function is as follows. Channel that opens in response to stretch forces in the membrane lipid bilayer. May participate in the regulation of osmotic pressure changes within the cell. This Lysinibacillus sphaericus (strain C3-41) protein is Large-conductance mechanosensitive channel.